The following is a 526-amino-acid chain: Glucose-6-phosphate isomerase (526 aa).

The Proton donor role is filled by Glu-320. Residues His-349 and Lys-453 contribute to the active site.

Belongs to the GPI family.

The protein localises to the cytoplasm. It catalyses the reaction alpha-D-glucose 6-phosphate = beta-D-fructose 6-phosphate. The protein operates within carbohydrate biosynthesis; gluconeogenesis. Its pathway is carbohydrate degradation; glycolysis; D-glyceraldehyde 3-phosphate and glycerone phosphate from D-glucose: step 2/4. Its function is as follows. Catalyzes the reversible isomerization of glucose-6-phosphate to fructose-6-phosphate. This Rippkaea orientalis (strain PCC 8801 / RF-1) (Cyanothece sp. (strain PCC 8801)) protein is Glucose-6-phosphate isomerase.